The sequence spans 412 residues: NF-kappa-B essential modulator (412 aa).

A disordered region spans residues 1–48 (MNKHPWKNQLSEMVQPSGGPAEDQDMLGEESSLGKPAMLHLPSEQGTP). The segment at 1-197 (MNKHPWKNQL…REVLQQQHSV (197 aa)) is required for interaction with and ubiquitination by MARCHF2. Phosphoserine; by IKKB occurs at positions 31 and 43. The interval 44 to 111 (EQGTPETLQR…KLVERLSLEK (68 aa)) is interaction with CHUK/IKBKB. A coiled-coil region spans residues 49-345 (ETLQRCLEEN…LKVGCHESAR (297 aa)). S68 is subject to Phosphoserine. The residue at position 85 (S85) is a Phosphoserine; by ATM. Residues K111, K139, K143, K226, and K246 each participate in a glycyl lysine isopeptide (Lys-Gly) (interchain with G-Cter in ubiquitin) cross-link. The interval 150–250 (LGELQESQSR…YDSHIKSSKG (101 aa)) is interaction with TANK. The interval 242–343 (DSHIKSSKGM…NKLKVGCHES (102 aa)) is ubiquitin-binding (UBAN). The self-association stretch occupies residues 246-358 (KSSKGMQLED…MRKRHVETPQ (113 aa)). Positions 249–412 (KGMQLEDLRQ…LQIHVMECIE (164 aa)) are required for interaction with TNFAIP3. Residues 250–339 (GMQLEDLRQQ…QREFNKLKVG (90 aa)) are linear polyubiquitin-binding, does not bind to 'Lys-63'-linked polyubiquitin. K270 is covalently cross-linked (Glycyl lysine isopeptide (Lys-Gly) (interchain with G-Cter in SUMO); alternate). A Glycyl lysine isopeptide (Lys-Gly) (interchain with G-Cter in ubiquitin); alternate cross-link involves residue K270. Glycyl lysine isopeptide (Lys-Gly) (interchain with G-Cter in ubiquitin) cross-links involve residues K276, K278, K285, and K295. Residue K302 forms a Glycyl lysine isopeptide (Lys-Gly) (interchain with G-Cter in SUMO); alternate linkage. A Glycyl lysine isopeptide (Lys-Gly) (interchain with G-Cter in ubiquitin); alternate cross-link involves residue K302. Glycyl lysine isopeptide (Lys-Gly) (interchain with G-Cter in ubiquitin) cross-links involve residues K314, K318, and K319. Residues 315 to 336 (LVEKKEYLQEQLEQLQREFNKL) form a leucine-zipper region. S369 carries the phosphoserine; by IKKB modification. Residues 375–412 (SNQRRSPPEEPPDFCCPKCQYQAPDMDTLQIHVMECIE) are interaction with CYLD. Residue S380 is modified to Phosphoserine. The CCHC NOA-type zinc finger occupies 382-412 (PEEPPDFCCPKCQYQAPDMDTLQIHVMECIE). C390 is a binding site for Zn(2+). K392 is covalently cross-linked (Glycyl lysine isopeptide (Lys-Gly) (interchain with G-Cter in ubiquitin)). Zn(2+) contacts are provided by C393, H406, and C410.

Homodimer; disulfide-linked. Component of the I-kappa-B-kinase (IKK) core complex consisting of CHUK, IKBKB and IKBKG; probably four alpha/CHUK-beta/IKBKB dimers are associated with four gamma/IKBKG subunits. The IKK core complex seems to associate with regulatory or adapter proteins to form a IKK-signalosome holo-complex. The IKK complex associates with TERF2IP/RAP1, leading to promote IKK-mediated phosphorylation of RELA/p65. Part of a complex composed of NCOA2, NCOA3, CHUK/IKKA, IKBKB, IKBKG and CREBBP. Interacts with COPS3, CYLD, NALP2, TRPC4AP and PIDD1. Interacts with ATM; the complex is exported from the nucleus. Interacts with TRAF6. Interacts with IKBKE. Interacts with TANK; the interaction is enhanced by IKBKE and TBK1. Part of a ternary complex consisting of TANK, IKBKB and IKBKG. Interacts with ZFAND5. Interacts with RIPK2. Interacts with TNIP1 and TNFAIP3; TNIP1 facilitates the TNFAIP3-mediated de-ubiquitination of IKBKG. Interacts with TNFAIP3; the interaction is induced by TNF stimulation and by polyubiquitin. Binds (via UBAN region) polyubiquitin; binds both 'Lys-63'-linked and linear polyubiquitin, with higher affinity for linear ubiquitin. Interacts with NLRP10. Interacts with TANK; this interaction increases in response to DNA damage. Interacts with USP10; this interaction increases in response to DNA damage. Interacts with ZC3H12A; this interaction increases in response to DNA damage. Interacts with IFIT5; the interaction synergizes the recruitment of IKK to MAP3K7 and enhances IKK phosphorylation. Interacts with TRIM29; this interaction induces IKBKG/NEMO ubiquitination and proteolytic degradation. Interacts with TRIM13; this interaction leads to IKBKG/NEMO ubiquitination. Interacts with ARFIP2. Interacts with RIPK1. Interacts with (ubiquitinated) BCL10; interaction with polyubiquitinated BCL10 via both 'Lys-63'-linked and linear ubiquitin is required for TCR-induced NF-kappa-B activation. Interacts with MARCHF2; during the late stages of macrophage viral and bacterial infection; the interaction leads to ubiquitination and degradation of IKBKG/NEMO. Post-translationally, phosphorylation at Ser-68 attenuates aminoterminal homodimerization. In terms of processing, polyubiquitinated on Lys-278 via 'Lys-63'-linked ubiquitin; the ubiquitination is mediated downstream of NOD2 and RIPK2 and probably plays a role in signaling by facilitating interactions with ubiquitin domain-containing proteins and activates the NF-kappa-B pathway. Polyubiquitinated on Lys-278 and Lys-302 through 'Lys-63'-linked ubiquitin; the ubiquitination is mediated by BCL10, MALT1 and TRAF6 and probably plays a role in signaling by facilitating interactions with ubiquitin domain-containing proteins and activates the NF-kappa-B pathway. Monoubiquitinated on Lys-270 and Lys-302; promotes nuclear export. Polyubiquitinated through 'Lys-27' by TRIM23; involved in antiviral innate and inflammatory responses. Linear polyubiquitinated on Lys-111, Lys-143, Lys-226, Lys-246, Lys-270, Lys-278, Lys-285, Lys-295, Lys-302 and Lys-319; the head-to-tail polyubiquitination is mediated by the LUBAC complex and plays a key role in NF-kappa-B activation. Deubiquitinated by USP10 in a TANK-dependent and -independent manner, leading to the negative regulation of NF-kappa-B signaling upon DNA damage. Ubiquitinated at Lys-319 by MARCHF2 following bacterial and viral infection which leads to its degradation. Polyubiquitinated via 'Lys-29'-linked ubiquitin; leading to lysosomal degradation. Sumoylated on Lys-270 and Lys-302 with SUMO1; the modification results in phosphorylation of Ser-85 by ATM leading to a replacement of the sumoylation by mono-ubiquitination on these residues. Post-translationally, neddylated by TRIM40, resulting in stabilization of NFKBIA and down-regulation of NF-kappa-B activity.

The protein resides in the cytoplasm. It is found in the nucleus. Its function is as follows. Regulatory subunit of the IKK core complex which phosphorylates inhibitors of NF-kappa-B thus leading to the dissociation of the inhibitor/NF-kappa-B complex and ultimately the degradation of the inhibitor. Its binding to scaffolding polyubiquitin plays a key role in IKK activation by multiple signaling receptor pathways. Can recognize and bind both 'Lys-63'-linked and linear polyubiquitin upon cell stimulation, with a much highr affinity for linear polyubiquitin. Could be implicated in NF-kappa-B-mediated protection from cytokine toxicity. Essential for viral activation of IRF3. Involved in TLR3- and IFIH1-mediated antiviral innate response; this function requires 'Lys-27'-linked polyubiquitination. This is NF-kappa-B essential modulator (Ikbkg) from Mus musculus (Mouse).